We begin with the raw amino-acid sequence, 223 residues long: Protein UGX2 (223 aa).

The span at 78-95 shows a compositional bias: basic residues; that stretch reads SNKRAKMKSKTKLTRTAK. Residues 78–117 are disordered; it reads SNKRAKMKSKTKLTRTAKQRRESPVCERDESDEDNDSDHY. Positions 96–105 are enriched in basic and acidic residues; the sequence is QRRESPVCER.

This is Protein UGX2 (UGX2) from Saccharomyces cerevisiae (strain ATCC 204508 / S288c) (Baker's yeast).